Reading from the N-terminus, the 320-residue chain is Glyoxylate/hydroxypyruvate reductase B (320 aa).

Residues Arg-233 and Glu-262 contribute to the active site. His-281 serves as the catalytic Proton donor.

It belongs to the D-isomer specific 2-hydroxyacid dehydrogenase family. GhrB subfamily. Homodimer.

The protein localises to the cytoplasm. It carries out the reaction glycolate + NADP(+) = glyoxylate + NADPH + H(+). The enzyme catalyses (R)-glycerate + NAD(+) = 3-hydroxypyruvate + NADH + H(+). It catalyses the reaction (R)-glycerate + NADP(+) = 3-hydroxypyruvate + NADPH + H(+). Catalyzes the NADPH-dependent reduction of glyoxylate and hydroxypyruvate into glycolate and glycerate, respectively. The chain is Glyoxylate/hydroxypyruvate reductase B from Pectobacterium atrosepticum (strain SCRI 1043 / ATCC BAA-672) (Erwinia carotovora subsp. atroseptica).